The following is a 210-amino-acid chain: NADH dehydrogenase [ubiquinone] iron-sulfur protein 8, mitochondrial (210 aa).

Residues 1–34 constitute a mitochondrion transit peptide; the sequence is MRCLTTPMLLRALAQAARAGPPCGRSLHSSAVAA. 2 consecutive 4Fe-4S ferredoxin-type domains span residues 102–131 and 141–170; these read RRYP…IEAE and TRYD…EGPN. [4Fe-4S] cluster-binding residues include Cys-111, Cys-114, Cys-117, Cys-121, Cys-150, Cys-153, Cys-156, and Cys-160.

Belongs to the complex I 23 kDa subunit family. In terms of assembly, core subunit of respiratory chain NADH dehydrogenase (Complex I) which is composed of 45 different subunits. This is a component of the iron-sulfur (IP) fragment of the enzyme. Interacts with RAB5IF. [4Fe-4S] cluster serves as cofactor.

It is found in the mitochondrion inner membrane. It catalyses the reaction a ubiquinone + NADH + 5 H(+)(in) = a ubiquinol + NAD(+) + 4 H(+)(out). Its function is as follows. Core subunit of the mitochondrial membrane respiratory chain NADH dehydrogenase (Complex I) which catalyzes electron transfer from NADH through the respiratory chain, using ubiquinone as an electron acceptor. Essential for the catalytic activity and assembly of complex I. The polypeptide is NADH dehydrogenase [ubiquinone] iron-sulfur protein 8, mitochondrial (NDUFS8) (Pongo abelii (Sumatran orangutan)).